A 1888-amino-acid chain; its full sequence is E3 ubiquitin-protein ligase UPL3 (1888 aa).

Residues Met-1 to Glu-10 show a composition bias toward basic and acidic residues. Residues Met-1–Ser-157 are disordered. Low complexity predominate over residues Leu-41–Ser-81. Residues Asn-97 to Leu-124 are compositionally biased toward basic and acidic residues. A compositionally biased stretch (acidic residues) spans Asp-137–Asp-146. 4 ARM repeats span residues Glu-227–Asp-267, Pro-270–Gln-310, His-312–Lys-349, and Leu-351–Glu-390. Disordered regions lie at residues Lys-660–Asn-711, Ala-970–Cys-1119, Asp-1134–Ala-1157, and Arg-1280–Gln-1307. The segment covering Pro-986–Thr-1002 has biased composition (low complexity). Residues Thr-1019–Gly-1029 show a composition bias toward basic and acidic residues. Acidic residues predominate over residues Ser-1076–Asp-1113. 2 stretches are compositionally biased toward low complexity: residues Ala-1148–Ala-1157 and Ala-1286–Ser-1303. A K-box region spans residues Ala-1377 to Gly-1451. An HECT domain is found at Met-1490 to Ser-1888. The Glycyl thioester intermediate role is filled by Cys-1855.

Belongs to the UPL family. K-HECT subfamily. In terms of tissue distribution, widely expressed.

It carries out the reaction S-ubiquitinyl-[E2 ubiquitin-conjugating enzyme]-L-cysteine + [acceptor protein]-L-lysine = [E2 ubiquitin-conjugating enzyme]-L-cysteine + N(6)-ubiquitinyl-[acceptor protein]-L-lysine.. It functions in the pathway protein modification; protein ubiquitination. In terms of biological role, probable E3 ubiquitin-protein ligase which mediates ubiquitination and subsequent proteasomal degradation of target proteins. Involved in the repression of endoreduplication process and the cell morphogenesis in the trichomes. This Arabidopsis thaliana (Mouse-ear cress) protein is E3 ubiquitin-protein ligase UPL3 (UPL3).